Reading from the N-terminus, the 202-residue chain is 3-isopropylmalate dehydratase small subunit 2 (202 aa).

It belongs to the LeuD family. LeuD type 1 subfamily. As to quaternary structure, heterodimer of LeuC and LeuD.

The enzyme catalyses (2R,3S)-3-isopropylmalate = (2S)-2-isopropylmalate. Its pathway is amino-acid biosynthesis; L-leucine biosynthesis; L-leucine from 3-methyl-2-oxobutanoate: step 2/4. Its function is as follows. Catalyzes the isomerization between 2-isopropylmalate and 3-isopropylmalate, via the formation of 2-isopropylmaleate. This is 3-isopropylmalate dehydratase small subunit 2 from Bordetella parapertussis (strain 12822 / ATCC BAA-587 / NCTC 13253).